A 292-amino-acid chain; its full sequence is 33 kDa chaperonin (292 aa).

2 cysteine pairs are disulfide-bonded: Cys-230-Cys-232 and Cys-263-Cys-266.

It belongs to the HSP33 family. In terms of processing, under oxidizing conditions two disulfide bonds are formed involving the reactive cysteines. Under reducing conditions zinc is bound to the reactive cysteines and the protein is inactive.

Its subcellular location is the cytoplasm. Functionally, redox regulated molecular chaperone. Protects both thermally unfolding and oxidatively damaged proteins from irreversible aggregation. Plays an important role in the bacterial defense system toward oxidative stress. This is 33 kDa chaperonin from Salmonella typhimurium (strain LT2 / SGSC1412 / ATCC 700720).